Consider the following 135-residue polypeptide: RxLR effector protein Avh5 (135 aa).

A signal peptide spans 1 to 19 (MRLQFFLVMAVATLATISA). The short motif at 43 to 71 (RFLRTADTDIVYEPKVHNPGKKQVFIEDK) is the RxLR-dEER element. Positions 81, 83, and 84 each coordinate a 1,2-diacyl-sn-glycero-3-phospho-(1D-myo-inositol-3-phosphate).

Belongs to the RxLR effector family.

The protein resides in the secreted. It is found in the host cell. Effector that suppresses plant defense responses during the early stages of pathogen infection. Suppresses cell death induced by effectors and PAMPs in plant hosts. This is RxLR effector protein Avh5 from Phytophthora sojae (Soybean stem and root rot agent).